Here is a 237-residue protein sequence, read N- to C-terminus: LexA repressor (237 aa).

Positions 26 to 46 (FDEMKDALGLKSKSGIHRLIT) form a DNA-binding region, H-T-H motif. Residues serine 158 and lysine 196 each act as for autocatalytic cleavage activity in the active site.

Belongs to the peptidase S24 family. In terms of assembly, homodimer.

The enzyme catalyses Hydrolysis of Ala-|-Gly bond in repressor LexA.. Functionally, represses a number of genes involved in the response to DNA damage (SOS response), including recA and lexA. In the presence of single-stranded DNA, RecA interacts with LexA causing an autocatalytic cleavage which disrupts the DNA-binding part of LexA, leading to derepression of the SOS regulon and eventually DNA repair. The protein is LexA repressor of Rhodospirillum centenum (strain ATCC 51521 / SW).